We begin with the raw amino-acid sequence, 432 residues long: Luc7-like protein 3 (432 aa).

Met1 carries the N-acetylmethionine modification. Phosphoserine occurs at positions 3, 110, and 115. Residues 124–181 adopt a coiled-coil conformation; the sequence is KNEEKIQVLTDKIDVLLQQIEELGSEGKVEEAQGMMKLVEQLKEERELLRSTTSTIES. An N6-acetyllysine modification is found at Lys231. The segment covering 234–287 has biased composition (basic and acidic residues); sequence LRKRTEEPDRDERLKKEKQEREEREKEREREREERERKRRREEEEREKERARDR. Residues 234–432 are disordered; sequence LRKRTEEPDR…IKSEGDTQSN (199 aa). Residues 288–301 are compositionally biased toward basic residues; sequence ERRKRSRSRSRHSS. The span at 302 to 311 shows a compositional bias: basic and acidic residues; the sequence is RTSDRRCSRS. The span at 312 to 367 shows a compositional bias: basic residues; it reads RDHKRSRSRERRRSRSRDRRRSRSHDRSERKHRSRSRDRRRSKSRDRKSYKHRSKS. Residues 368-414 are compositionally biased toward basic and acidic residues; the sequence is RDREQDRKSKEKEKRGSDDKKSSVKSSSREKQSEDTNTESKESDTKN. Ser420 is subject to Phosphoserine. The span at 421–432 shows a compositional bias: basic and acidic residues; it reads EDIKSEGDTQSN. A Glycyl lysine isopeptide (Lys-Gly) (interchain with G-Cter in SUMO1); alternate cross-link involves residue Lys424. Lys424 participates in a covalent cross-link: Glycyl lysine isopeptide (Lys-Gly) (interchain with G-Cter in SUMO2); alternate. Ser425 and Ser431 each carry phosphoserine.

The protein belongs to the Luc7 family. As to quaternary structure, may interact with SFRS1 and form homodimers. Interacts with JMJD6. Interacts with RBM25. Interacts with RSRC1 (via Arg/Ser-rich domain). Interacts with RRP1B.

The protein resides in the nucleus speckle. Functionally, binds cAMP regulatory element DNA sequence. May play a role in RNA splicing. This Bos taurus (Bovine) protein is Luc7-like protein 3 (LUC7L3).